Consider the following 177-residue polypeptide: Large ribosomal subunit protein uL6 (177 aa).

Belongs to the universal ribosomal protein uL6 family. Part of the 50S ribosomal subunit.

Functionally, this protein binds to the 23S rRNA, and is important in its secondary structure. It is located near the subunit interface in the base of the L7/L12 stalk, and near the tRNA binding site of the peptidyltransferase center. This is Large ribosomal subunit protein uL6 from Pasteurella multocida (strain Pm70).